We begin with the raw amino-acid sequence, 114 residues long: Hydrogenase maturation factor HypA (114 aa).

Histidine 2 contacts Ni(2+). Cysteine 73, cysteine 76, cysteine 90, and cysteine 93 together coordinate Zn(2+).

The protein belongs to the HypA/HybF family.

In terms of biological role, involved in the maturation of [NiFe] hydrogenases. Required for nickel insertion into the metal center of the hydrogenase. The polypeptide is Hydrogenase maturation factor HypA (Chloroflexus aurantiacus (strain ATCC 29366 / DSM 635 / J-10-fl)).